The chain runs to 758 residues: Transmembrane E3 ubiquitin-protein ligase 1 (758 aa).

The N-terminal stretch at 1–26 (MEIDGNTLVFIIVILFLFFSSPGGDG) is a signal peptide. The Lumenal segment spans residues 27–398 (VSSQYEFNQL…YELKIMSIRK (372 aa)). A helical membrane pass occupies residues 399-419 (HLLFGIALFAAQIYLLLTQMH). At 420-431 (HTNTPSMVNKIS) the chain is on the cytoplasmic side. Residues 432–452 (FYCFSMINLVDGSLATLYFVA) form a helical membrane-spanning segment. Over 453 to 458 (ASVVPE) the chain is Lumenal. The chain crosses the membrane as a helical span at residues 459–479 (LYLPLVISAFSCFILASIFEI). Residues 480-523 (RYLISIYASQVNEQNVGIINLLRGNTGTYDENRPRPAFIPDEGS) are Cytoplasmic-facing. Residues 524-544 (IGGSLYGRFFFMLIIFTFLIL) form a helical membrane-spanning segment. Residues 545–553 (SSTSWPRQL) lie on the Lumenal side of the membrane. The chain crosses the membrane as a helical span at residues 554 to 574 (RMVFEYILIFILNSYWIPQIF). The Cytoplasmic portion of the chain corresponds to 575–602 (RNAVKGIPSRRERARSSIGGNRSQNKMP). A helical membrane pass occupies residues 603-623 (LLWSFVIGTTIIRSLPVVYVF). Over 624–635 (TYSSNVFRHHKD) the chain is Lumenal. A helical transmembrane segment spans residues 636–656 (VHFVVFLSLWLLFQISILYSQ). Residues 657-758 (DVLGSRWFLP…PVCRSPLPPL (102 aa)) lie on the Cytoplasmic side of the membrane. An RING-type; atypical zinc finger spans residues 699 to 752 (CAICMSDVPIYIEEIPETHKVDQHSYMVTPCNHVFHTSCLENWMNYKLQCPVCR).

In terms of assembly, component of the DSC E3 ligase complexes composed of at least TUL1, DSC2, DSC3, UBX3, CDC48 as well as VLD1 for the vacuole-localized complex or GLD1 for the Golgi/endosome-localized complex. Interacts with UBC4.

Its subcellular location is the golgi apparatus membrane. It carries out the reaction S-ubiquitinyl-[E2 ubiquitin-conjugating enzyme]-L-cysteine + [acceptor protein]-L-lysine = [E2 ubiquitin-conjugating enzyme]-L-cysteine + N(6)-ubiquitinyl-[acceptor protein]-L-lysine.. It functions in the pathway protein modification; protein ubiquitination. Catalytic component of the DSC E3 ubiquitin ligase complexes that tag proteins present in Golgi, endosome and vacuole membranes and function in protein homeostasis under non-stress conditions and support a role in protein quality control. Mediates ubiquitination of vacuolar proteins such as CPS1, PPN1, PEP12 and other proteins containing exposed hydrophilic residues within their transmembrane domains, leading to their sorting into internal vesicles in late endosomes. Targets also the unpalmitoylated endosomal SNARE TLG1 to the MVB pathway. The protein is Transmembrane E3 ubiquitin-protein ligase 1 (TUL1) of Saccharomyces cerevisiae (strain ATCC 204508 / S288c) (Baker's yeast).